The chain runs to 419 residues: Fusaric acid cluster transcription factor FUB10 (419 aa).

A DNA-binding region (zn(2)-C6 fungal-type) is located at residues 16–47 (CDRCRAQKLRCHRDSGHSTDACLRCLKSGIEC). Residues 50–92 (SKARPTGRPPSRQVQPTVVVEQGDTSSSSHTTDSSPSAGGTDM) are disordered. Residues 74–86 (TSSSSHTTDSSPS) show a composition bias toward low complexity.

The protein resides in the nucleus. Transcription factor that regulates the expression of the gene cluster that mediates the biosynthesis of fusaric acid, a mycotoxin with low to moderate toxicity to animals and humans, but with high phytotoxic properties. This chain is Fusaric acid cluster transcription factor FUB10, found in Gibberella fujikuroi (strain CBS 195.34 / IMI 58289 / NRRL A-6831) (Bakanae and foot rot disease fungus).